We begin with the raw amino-acid sequence, 310 residues long: Aspartate carbamoyltransferase catalytic subunit (310 aa).

The carbamoyl phosphate site is built by Arg55 and Thr56. Lys83 is an L-aspartate binding site. Arg105, His133, and Gln136 together coordinate carbamoyl phosphate. 2 residues coordinate L-aspartate: Arg166 and Arg220. 2 residues coordinate carbamoyl phosphate: Gly261 and Pro262.

This sequence belongs to the aspartate/ornithine carbamoyltransferase superfamily. ATCase family. In terms of assembly, heterododecamer (2C3:3R2) of six catalytic PyrB chains organized as two trimers (C3), and six regulatory PyrI chains organized as three dimers (R2).

The catalysed reaction is carbamoyl phosphate + L-aspartate = N-carbamoyl-L-aspartate + phosphate + H(+). Its pathway is pyrimidine metabolism; UMP biosynthesis via de novo pathway; (S)-dihydroorotate from bicarbonate: step 2/3. Catalyzes the condensation of carbamoyl phosphate and aspartate to form carbamoyl aspartate and inorganic phosphate, the committed step in the de novo pyrimidine nucleotide biosynthesis pathway. The polypeptide is Aspartate carbamoyltransferase catalytic subunit (Chlorobium phaeovibrioides (strain DSM 265 / 1930) (Prosthecochloris vibrioformis (strain DSM 265))).